We begin with the raw amino-acid sequence, 565 residues long: NAD-dependent malic enzyme (565 aa).

Catalysis depends on Tyr104, which acts as the Proton donor. Arg157 provides a ligand contact to NAD(+). Residue Lys175 is the Proton acceptor of the active site. Residues Glu246, Asp247, and Asp270 each coordinate a divalent metal cation. The NAD(+) site is built by Asp270 and Asn418.

This sequence belongs to the malic enzymes family. Homotetramer. Requires Mg(2+) as cofactor. The cofactor is Mn(2+).

The enzyme catalyses (S)-malate + NAD(+) = pyruvate + CO2 + NADH. The catalysed reaction is oxaloacetate + H(+) = pyruvate + CO2. This chain is NAD-dependent malic enzyme, found in Salmonella agona (strain SL483).